We begin with the raw amino-acid sequence, 406 residues long: Cholinephosphotransferase 1 (406 aa).

At Ala2 the chain carries N-acetylalanine. Topologically, residues 2–62 are cytoplasmic; sequence AAGAGARPAP…LLQWIPLWMA (61 aa). The helical transmembrane segment at 63 to 83 threads the bilayer; the sequence is PNSITLLGLAINMLTTLVLIS. CDP-choline is bound at residue Asn64. Residues 84 to 93 lie on the Lumenal side of the membrane; sequence YCPTVTEEAP. Residues 94–118 traverse the membrane as a helical segment; that stretch reads YWTYLLCALGLFIYQSLDAIDGKQA. Mg(2+) is bound by residues Asp111 and Asp114. CDP-choline is bound at residue Arg119. Over 119–125 the chain is Cytoplasmic; sequence RRTNSCS. A helical membrane pass occupies residues 126 to 150; the sequence is PLGELFDHGCDSLSTVFMAVGASIA. A Mg(2+)-binding site is contributed by Asp132. Residue His133 is the Proton acceptor of the active site. Position 136 (Asp136) interacts with Mg(2+). The Lumenal portion of the chain corresponds to 151–160; sequence VRLGTHPDWL. The chain crosses the membrane as a helical span at residues 161–179; that stretch reads FFCSFIGMFMFYCAHWQTY. Over 180 to 190 the chain is Cytoplasmic; the sequence is VSGVLRFGKVD. The helical transmembrane segment at 191-207 threads the bilayer; sequence VTEIQIALVIVFVLSTF. Residues 208-222 lie on the Lumenal side of the membrane; the sequence is GGATMWDYTIPILEI. Residues 223 to 248 form a helical membrane-spanning segment; it reads KLKILPVLGVVGGAIFSCSNYFHVIL. Over 249–265 the chain is Cytoplasmic; the sequence is HGGVGKNGSTIAGTSVL. A helical membrane pass occupies residues 266–281; the sequence is SPGLHIGIIIILAIMI. Topologically, residues 282 to 293 are lumenal; it reads YKKSATNLFEKH. A helical membrane pass occupies residues 294-316; the sequence is PCLYTLMFGCVFAKVSQKLVIAH. Residues 317-329 are Cytoplasmic-facing; it reads MTKSELYLQDTVF. A helical membrane pass occupies residues 330–339; it reads IGPGLLFLDQ. Over 340–346 the chain is Lumenal; sequence YFNNFVD. The chain crosses the membrane as a helical span at residues 347 to 376; sequence EYIVLWIAMVISSLDMMRYFSALCLQISRH. The Cytoplasmic portion of the chain corresponds to 377–406; that stretch reads LHLSIFKTSCHQAPEQVQVLPPKSHQNNMD.

It belongs to the CDP-alcohol phosphatidyltransferase class-I family. Mg(2+) serves as cofactor. Mn(2+) is required as a cofactor.

The protein localises to the golgi apparatus membrane. The enzyme catalyses CDP-choline + a 1,2-diacyl-sn-glycerol = a 1,2-diacyl-sn-glycero-3-phosphocholine + CMP + H(+). It catalyses the reaction 1-octadecanoyl-2-(5Z,8Z,11Z,14Z-eicosatetraenoyl)-sn-glycerol + CDP-choline = 1-octadecanoyl-2-(5Z,8Z,11Z,14Z-eicosatetraenoyl)-sn-glycero-3-phosphocholine + CMP + H(+). The catalysed reaction is 1-hexadecanoyl-2-(9Z-octadecenoyl)-sn-glycerol + CDP-choline = 1-hexadecanoyl-2-(9Z-octadecenoyl)-sn-glycero-3-phosphocholine + CMP + H(+). It carries out the reaction 1-hexadecanoyl-2-(4Z,7Z,10Z,13Z,16Z,19Z-docosahexaenoyl)-sn-glycerol + CDP-choline = 1-hexadecanoyl-2-(4Z,7Z,10Z,13Z,16Z,19Z-docosahexaenoyl)-sn-glycero-3-phosphocholine + CMP + H(+). The enzyme catalyses 1,2-dioctanoyl-sn-glycerol + CDP-choline = 1,2-dioctanoyl-sn-glycero-3-phosphocholine + CMP + H(+). It participates in phospholipid metabolism; phosphatidylcholine biosynthesis; phosphatidylcholine from phosphocholine: step 2/2. Catalyzes the final step of de novo phosphatidylcholine (PC) synthesis, i.e. the transfer of choline phosphate from CDP-choline to the free hydroxyl of a diacylglycerol (DAG), producing a PC. It thereby plays a central role in the formation and maintenance of vesicular membranes. The polypeptide is Cholinephosphotransferase 1 (CHPT1) (Bos taurus (Bovine)).